Consider the following 274-residue polypeptide: Dermonecrotic toxin SdSicTox-betaIIB1bxiii (274 aa).

The active site involves His-5. Positions 25 and 27 each coordinate Mg(2+). The active-site Nucleophile is His-41. 2 disulfides stabilise this stretch: Cys-45-Cys-51 and Cys-47-Cys-190. Asp-85 is a Mg(2+) binding site.

The protein belongs to the arthropod phospholipase D family. Class II subfamily. Mg(2+) is required as a cofactor. In terms of tissue distribution, expressed by the venom gland.

It localises to the secreted. It carries out the reaction an N-(acyl)-sphingosylphosphocholine = an N-(acyl)-sphingosyl-1,3-cyclic phosphate + choline. The enzyme catalyses an N-(acyl)-sphingosylphosphoethanolamine = an N-(acyl)-sphingosyl-1,3-cyclic phosphate + ethanolamine. The catalysed reaction is a 1-acyl-sn-glycero-3-phosphocholine = a 1-acyl-sn-glycero-2,3-cyclic phosphate + choline. It catalyses the reaction a 1-acyl-sn-glycero-3-phosphoethanolamine = a 1-acyl-sn-glycero-2,3-cyclic phosphate + ethanolamine. Functionally, dermonecrotic toxins cleave the phosphodiester linkage between the phosphate and headgroup of certain phospholipids (sphingolipid and lysolipid substrates), forming an alcohol (often choline) and a cyclic phosphate. This toxin acts on sphingomyelin (SM). It may also act on ceramide phosphoethanolamine (CPE), lysophosphatidylcholine (LPC) and lysophosphatidylethanolamine (LPE), but not on lysophosphatidylserine (LPS), and lysophosphatidylglycerol (LPG). It acts by transphosphatidylation, releasing exclusively cyclic phosphate products as second products. Induces dermonecrosis, hemolysis, increased vascular permeability, edema, inflammatory response, and platelet aggregation. The chain is Dermonecrotic toxin SdSicTox-betaIIB1bxiii from Sicarius cf. damarensis (strain GJB-2008) (Six-eyed sand spider).